A 105-amino-acid chain; its full sequence is Translation initiation factor 1A 2 (105 aa).

The interval 1–22 (MRKRREGSAAPSTQEVTRVRTP) is disordered. One can recognise an S1-like domain in the interval 17 to 91 (TRVRTPRKEN…TKADVIWKYT (75 aa)).

This sequence belongs to the eIF-1A family.

In terms of biological role, seems to be required for maximal rate of protein biosynthesis. Enhances ribosome dissociation into subunits and stabilizes the binding of the initiator Met-tRNA(I) to 40 S ribosomal subunits. The polypeptide is Translation initiation factor 1A 2 (eIF1A2) (Methanosarcina acetivorans (strain ATCC 35395 / DSM 2834 / JCM 12185 / C2A)).